The chain runs to 126 residues: Large-conductance mechanosensitive channel (126 aa).

Helical transmembrane passes span 17-37 (VDLA…SSFI) and 70-90 (GLFL…FLII).

It belongs to the MscL family. As to quaternary structure, homopentamer.

The protein resides in the cell inner membrane. Functionally, channel that opens in response to stretch forces in the membrane lipid bilayer. May participate in the regulation of osmotic pressure changes within the cell. The protein is Large-conductance mechanosensitive channel of Flavobacterium johnsoniae (strain ATCC 17061 / DSM 2064 / JCM 8514 / BCRC 14874 / CCUG 350202 / NBRC 14942 / NCIMB 11054 / UW101) (Cytophaga johnsonae).